The following is a 115-amino-acid chain: Large ribosomal subunit protein bL20c (115 aa).

The protein belongs to the bacterial ribosomal protein bL20 family.

It localises to the plastid. It is found in the chloroplast. In terms of biological role, binds directly to 23S ribosomal RNA and is necessary for the in vitro assembly process of the 50S ribosomal subunit. It is not involved in the protein synthesizing functions of that subunit. The chain is Large ribosomal subunit protein bL20c (rpl20) from Cyanidium caldarium (Red alga).